We begin with the raw amino-acid sequence, 177 residues long: Large ribosomal subunit protein uL6 (177 aa).

Belongs to the universal ribosomal protein uL6 family. In terms of assembly, part of the 50S ribosomal subunit.

Functionally, this protein binds to the 23S rRNA, and is important in its secondary structure. It is located near the subunit interface in the base of the L7/L12 stalk, and near the tRNA binding site of the peptidyltransferase center. The sequence is that of Large ribosomal subunit protein uL6 from Agrobacterium fabrum (strain C58 / ATCC 33970) (Agrobacterium tumefaciens (strain C58)).